The chain runs to 431 residues: Chaperone SurA (431 aa).

Residues 1–20 form the signal peptide; the sequence is MKNWRTLILGLALSASTAFA. PpiC domains lie at 171–272 and 282–382; these read NDEL…KVND and VTET…QLLD.

The protein localises to the periplasm. The enzyme catalyses [protein]-peptidylproline (omega=180) = [protein]-peptidylproline (omega=0). Chaperone involved in the correct folding and assembly of outer membrane proteins. Recognizes specific patterns of aromatic residues and the orientation of their side chains, which are found more frequently in integral outer membrane proteins. May act in both early periplasmic and late outer membrane-associated steps of protein maturation. This Pectobacterium atrosepticum (strain SCRI 1043 / ATCC BAA-672) (Erwinia carotovora subsp. atroseptica) protein is Chaperone SurA.